The following is a 156-amino-acid chain: SPbeta prophage-derived uncharacterized protein YosH (156 aa).

In Bacillus subtilis (strain 168), this protein is SPbeta prophage-derived uncharacterized protein YosH (yosH).